Reading from the N-terminus, the 274-residue chain is Penicillin-insensitive murein endopeptidase (274 aa).

A signal peptide spans 1-19 (MNKTAIALLALLASSASLA). Disulfide bonds link Cys44–Cys265, Cys187–Cys235, and Cys216–Cys223. Zn(2+) contacts are provided by His110, His113, Asp120, Asp147, His150, and His211. The tract at residues 227–274 (PLPPPGDGCGAELQSWFEPPKPGTTKPEKKTPPPLPPSCQALLDEHVI) is disordered.

This sequence belongs to the peptidase M74 family. Dimer. The cofactor is Zn(2+).

It is found in the periplasm. Murein endopeptidase that cleaves the D-alanyl-meso-2,6-diamino-pimelyl amide bond that connects peptidoglycan strands. Likely plays a role in the removal of murein from the sacculus. This Escherichia coli O9:H4 (strain HS) protein is Penicillin-insensitive murein endopeptidase.